The chain runs to 130 residues: Small ribosomal subunit protein uS11 (130 aa).

The protein belongs to the universal ribosomal protein uS11 family. Part of the 30S ribosomal subunit.

Located on the platform of the 30S subunit. The chain is Small ribosomal subunit protein uS11 from Ignicoccus hospitalis (strain KIN4/I / DSM 18386 / JCM 14125).